A 721-amino-acid polypeptide reads, in one-letter code: Probable acyl-activating enzyme 17, peroxisomal (721 aa).

The short motif at 719-721 is the Microbody targeting signal element; it reads SKL.

It belongs to the ATP-dependent AMP-binding enzyme family. In terms of tissue distribution, expressed in leaves, stems and developing seeds.

The protein localises to the peroxisome. May act as an acid--thiol ligase that activates carboxylic acids by forming acyl-CoAs. This is Probable acyl-activating enzyme 17, peroxisomal (AAE17) from Arabidopsis thaliana (Mouse-ear cress).